Reading from the N-terminus, the 451-residue chain is UPF0761 membrane protein Hhal_0704 (451 aa).

Helical transmembrane passes span 66–86 (LLAI…FPVF), 122–142 (ELTA…LNTI), 162–182 (FMVY…SVAS), 204–224 (LLNL…YSLV), 228–248 (SVPV…FELA), and 268–288 (ALAA…VILI).

The protein belongs to the UPF0761 family.

It is found in the cell inner membrane. The polypeptide is UPF0761 membrane protein Hhal_0704 (Halorhodospira halophila (strain DSM 244 / SL1) (Ectothiorhodospira halophila (strain DSM 244 / SL1))).